Consider the following 370-residue polypeptide: ATP synthase gamma chain, chloroplastic (370 aa).

Residues 1–54 constitute a chloroplast transit peptide; that stretch reads MRSFCIAALLAVASAFTTQPTSFTVKTANVGERASGVFPEQSSAHRTRKATIVM. The active site involves cysteine 145.

This sequence belongs to the ATPase gamma chain family. F-type ATPases have 2 components, CF(1) - the catalytic core - and CF(0) - the membrane proton channel. CF(1) has five subunits: alpha(3), beta(3), gamma(1), delta(1), epsilon(1). CF(0) has four main subunits: a, b, b' and c.

The protein resides in the plastid. Its subcellular location is the chloroplast thylakoid membrane. Its function is as follows. Produces ATP from ADP in the presence of a proton gradient across the membrane. The gamma chain is believed to be important in regulating ATPase activity and the flow of protons through the CF(0) complex. The protein is ATP synthase gamma chain, chloroplastic (ATPC) of Phaeodactylum tricornutum (Diatom).